The chain runs to 192 residues: Nucleotidase CA_C3379 (192 aa).

It belongs to the 5'(3')-deoxyribonucleotidase family. Mg(2+) is required as a cofactor.

It carries out the reaction sugar phosphate + H2O = sugar + phosphate.. Its function is as follows. Catalyzes the dephosphorylation of nucleotide monophosphates and of different sugar phosphates in vitro. The protein is Nucleotidase CA_C3379 of Clostridium acetobutylicum (strain ATCC 824 / DSM 792 / JCM 1419 / IAM 19013 / LMG 5710 / NBRC 13948 / NRRL B-527 / VKM B-1787 / 2291 / W).